The primary structure comprises 127 residues: MFRTMMRAKLHRATVTEANLNYVGSITIDEDLMDAVNIVENEKVQIVNNNNGARLETYVIKGERGSGVVCLNGAAARLVQPGDKVIIICYGLVAEENIHKQEPKIAVLDDDNQIIEMLGAEKAGTIL.

Residue serine 25 is the Schiff-base intermediate with substrate; via pyruvic acid of the active site. The residue at position 25 (serine 25) is a Pyruvic acid (Ser). Threonine 57 serves as a coordination point for substrate. The active-site Proton donor is tyrosine 58. Residue 73-75 (GAA) coordinates substrate.

This sequence belongs to the PanD family. Heterooctamer of four alpha and four beta subunits. The cofactor is pyruvate. Post-translationally, is synthesized initially as an inactive proenzyme, which is activated by self-cleavage at a specific serine bond to produce a beta-subunit with a hydroxyl group at its C-terminus and an alpha-subunit with a pyruvoyl group at its N-terminus.

It is found in the cytoplasm. It catalyses the reaction L-aspartate + H(+) = beta-alanine + CO2. It participates in cofactor biosynthesis; (R)-pantothenate biosynthesis; beta-alanine from L-aspartate: step 1/1. Catalyzes the pyruvoyl-dependent decarboxylation of aspartate to produce beta-alanine. The polypeptide is Aspartate 1-decarboxylase (Bacillus cereus (strain 03BB102)).